Here is a 728-residue protein sequence, read N- to C-terminus: Polyribonucleotide nucleotidyltransferase (728 aa).

Residues D513 and D519 each contribute to the Mg(2+) site. A KH domain is found at 580 to 640 (PKVKMILIKP…EIVDLTVTYI (61 aa)). The S1 motif domain maps to 650-724 (ENVYEVKILR…ERGQIDLSKK (75 aa)).

This sequence belongs to the polyribonucleotide nucleotidyltransferase family. The cofactor is Mg(2+).

It is found in the cytoplasm. The enzyme catalyses RNA(n+1) + phosphate = RNA(n) + a ribonucleoside 5'-diphosphate. Functionally, involved in mRNA degradation. Catalyzes the phosphorolysis of single-stranded polyribonucleotides processively in the 3'- to 5'-direction. This Phytoplasma mali (strain AT) protein is Polyribonucleotide nucleotidyltransferase.